Consider the following 316-residue polypeptide: MAGFDPTLQPSDDRGHLLTEQSNPRSRRLDQLATNDLVNLFVEEDRRPQEAVAEASEAIAAAVDAISKRLSSGGRLFYLGAGTSGRLGVLDAAECPPTFCSDPELVQGVLAGGTPALLRSSEGLEDLEQAGRDDLDRHGFRQGDCLVGIAAGGTTPYVRGGLSYACSIGALAIAMACVPKDQAPLPCDIDIRLLTGPELLTGSTRLKAGTATKMALNILSTTVMVRLGKVYGNRMVDVAASNSKLVDRSLRILRDLIGVEREEGLALLALSDGSVKLALLMKAANLSKDQARSVLERHDQQLRPSLETCGATLAQL.

The interval M1–N23 is disordered. Positions I66 to K229 constitute an SIS domain. E94 (proton donor) is an active-site residue. Residue E125 is part of the active site.

It belongs to the GCKR-like family. MurNAc-6-P etherase subfamily. In terms of assembly, homodimer.

It catalyses the reaction N-acetyl-D-muramate 6-phosphate + H2O = N-acetyl-D-glucosamine 6-phosphate + (R)-lactate. Its pathway is amino-sugar metabolism; N-acetylmuramate degradation. Specifically catalyzes the cleavage of the D-lactyl ether substituent of MurNAc 6-phosphate, producing GlcNAc 6-phosphate and D-lactate. This chain is N-acetylmuramic acid 6-phosphate etherase, found in Synechococcus sp. (strain CC9902).